A 181-amino-acid polypeptide reads, in one-letter code: Large ribosomal subunit protein bL17 (181 aa).

The disordered stretch occupies residues 129-181 (AEKSEKSAKTAKAAKAPAKKATAKKASTKAVAAKKKAVKKAQKKDRAASAARA). Basic residues predominate over residues 145–171 (PAKKATAKKASTKAVAAKKKAVKKAQK).

This sequence belongs to the bacterial ribosomal protein bL17 family. As to quaternary structure, part of the 50S ribosomal subunit. Contacts protein L32.

The sequence is that of Large ribosomal subunit protein bL17 from Bdellovibrio bacteriovorus (strain ATCC 15356 / DSM 50701 / NCIMB 9529 / HD100).